The sequence spans 339 residues: Protein pelota homolog (339 aa).

This sequence belongs to the eukaryotic release factor 1 family. Pelota subfamily. As to quaternary structure, monomer. It depends on a divalent metal cation as a cofactor.

It is found in the cytoplasm. Its function is as follows. May function in recognizing stalled ribosomes, interact with stem-loop structures in stalled mRNA molecules, and effect endonucleolytic cleavage of the mRNA. May play a role in the release non-functional ribosomes and degradation of damaged mRNAs. Has endoribonuclease activity. This chain is Protein pelota homolog (pelA), found in Thermoplasma acidophilum (strain ATCC 25905 / DSM 1728 / JCM 9062 / NBRC 15155 / AMRC-C165).